The following is a 431-amino-acid chain: Divergent protein kinase domain 1B (431 aa).

Residues 1–30 lie on the Cytoplasmic side of the membrane; sequence MRRLRRLAHLVLFCPFSKRLQGRLPGLRVR. A May mediate ER retention motif is present at residues 5–6; that stretch reads RR. The helical transmembrane segment at 31-51 threads the bilayer; that stretch reads CIFLAWLGVFAGSWLVYVHYS. Residues 52 to 431 are Lumenal-facing; that stretch reads SYSERCRGHV…WKKISNTKYS (380 aa). 2 cysteine pairs are disulfide-bonded: Cys-57-Cys-94 and Cys-62-Cys-117.

This sequence belongs to the DIPK family. Among the many cysteines in the lumenal domain, most are probably involved in disulfide bonds.

It localises to the endoplasmic reticulum membrane. The polypeptide is Divergent protein kinase domain 1B (Homo sapiens (Human)).